A 185-amino-acid polypeptide reads, in one-letter code: Ribosome-recycling factor (185 aa).

Belongs to the RRF family.

Its subcellular location is the cytoplasm. Responsible for the release of ribosomes from messenger RNA at the termination of protein biosynthesis. May increase the efficiency of translation by recycling ribosomes from one round of translation to another. This chain is Ribosome-recycling factor, found in Campylobacter concisus (strain 13826).